The following is a 117-amino-acid chain: Large ribosomal subunit protein uL18 (117 aa).

This sequence belongs to the universal ribosomal protein uL18 family. In terms of assembly, part of the 50S ribosomal subunit; part of the 5S rRNA/L5/L18/L25 subcomplex. Contacts the 5S and 23S rRNAs.

This is one of the proteins that bind and probably mediate the attachment of the 5S RNA into the large ribosomal subunit, where it forms part of the central protuberance. The chain is Large ribosomal subunit protein uL18 from Buchnera aphidicola subsp. Acyrthosiphon kondoi (Acyrthosiphon kondoi symbiotic bacterium).